The primary structure comprises 655 residues: ATP-dependent RNA helicase mss116, mitochondrial (655 aa).

Residues 1-56 constitute a mitochondrion transit peptide; that stretch reads MMLGAVRRYGVVHALRASVPRTICRPSNSQLLRCQTSPVTACPQSVRLLHKSSPFF. The short motif at 84–113 is the Q motif element; that stretch reads DLAERGLVDPKIIRAIVKDMNIKTMTDVQS. The Helicase ATP-binding domain maps to 116–307; it reads LREILQGDDV…RKTMKPNFKF (192 aa). ATP is bound at residue 129-136; it reads AKTGTGKT. Positions 251–254 match the DEAD box motif; it reads DEAD. Positions 341–503 constitute a Helicase C-terminal domain; the sequence is EFVTKYVEGE…TFATATVDMT (163 aa). Positions 594–642 are disordered; the sequence is YRGSSDNMSTRPDYRGGDRDMWASNSRRGREFNSDRRESRFGNHRNADD. Basic and acidic residues-rich tracts occupy residues 605–614 and 621–642; these read PDYRGGDRDM and RGRE…NADD.

It belongs to the DEAD box helicase family. DDX18/HAS1 subfamily.

The protein resides in the mitochondrion matrix. It catalyses the reaction ATP + H2O = ADP + phosphate + H(+). Its function is as follows. ATP-dependent RNA helicase required for mitochondrial splicing of group I and II introns. Also required for efficient mitochondrial translation. This Aspergillus fumigatus (strain ATCC MYA-4609 / CBS 101355 / FGSC A1100 / Af293) (Neosartorya fumigata) protein is ATP-dependent RNA helicase mss116, mitochondrial (mss116).